A 375-amino-acid polypeptide reads, in one-letter code: Citrate synthase (375 aa).

Active-site residues include histidine 266 and aspartate 317.

Belongs to the citrate synthase family. As to quaternary structure, homohexamer.

The catalysed reaction is oxaloacetate + acetyl-CoA + H2O = citrate + CoA + H(+). The protein operates within carbohydrate metabolism; tricarboxylic acid cycle; isocitrate from oxaloacetate: step 1/2. Its activity is regulated as follows. Allosterically inhibited by NADH. In Mycolicibacterium smegmatis (Mycobacterium smegmatis), this protein is Citrate synthase (gltA).